Here is a 493-residue protein sequence, read N- to C-terminus: Putative glycerol-3-phosphate transporter 5 (493 aa).

The next 12 helical transmembrane spans lie at 25 to 44 (FTFH…ASFH), 83 to 103 (LGEL…FAGH), 113 to 133 (FLVF…LGYW), 145 to 165 (VQIV…SVVG), 185 to 205 (SVGN…GWGW), 207 to 227 (FVLP…FLVV), 292 to 312 (FCLF…PYYL), 328 to 348 (GILS…AGFI), 352 to 372 (IKAR…ALIM), 375 to 395 (VYGS…GLLV), 428 to 448 (AIID…AGYI), and 452 to 472 (GWNS…LFLV).

It belongs to the major facilitator superfamily. Organophosphate:Pi antiporter (OPA) (TC 2.A.1.4) family.

The protein localises to the membrane. In Arabidopsis thaliana (Mouse-ear cress), this protein is Putative glycerol-3-phosphate transporter 5.